The sequence spans 309 residues: tRNA-cytidine(32) 2-sulfurtransferase (309 aa).

The short motif at 45-50 (SGGKDS) is the PP-loop motif element. The [4Fe-4S] cluster site is built by Cys120, Cys123, and Cys211.

This sequence belongs to the TtcA family. In terms of assembly, homodimer. It depends on Mg(2+) as a cofactor. [4Fe-4S] cluster serves as cofactor.

The protein localises to the cytoplasm. The enzyme catalyses cytidine(32) in tRNA + S-sulfanyl-L-cysteinyl-[cysteine desulfurase] + AH2 + ATP = 2-thiocytidine(32) in tRNA + L-cysteinyl-[cysteine desulfurase] + A + AMP + diphosphate + H(+). It functions in the pathway tRNA modification. Catalyzes the ATP-dependent 2-thiolation of cytidine in position 32 of tRNA, to form 2-thiocytidine (s(2)C32). The sulfur atoms are provided by the cysteine/cysteine desulfurase (IscS) system. The polypeptide is tRNA-cytidine(32) 2-sulfurtransferase (Psychromonas ingrahamii (strain DSM 17664 / CCUG 51855 / 37)).